We begin with the raw amino-acid sequence, 209 residues long: B3 domain-containing protein At2g31420 (209 aa).

A DNA-binding region (TF-B3) is located at residues 101-198 (LSKLEKSDFL…KLCFALSSPT (98 aa)).

The protein localises to the nucleus. This is B3 domain-containing protein At2g31420 from Arabidopsis thaliana (Mouse-ear cress).